Reading from the N-terminus, the 432-residue chain is Non-peptidase homolog YmxG (432 aa).

Positions 1–20 are cleaved as a signal peptide; the sequence is MKKFLITLLLGVFMGLQASA.

The protein belongs to the peptidase M16 family.

The protein resides in the secreted. In terms of biological role, may contribute to the full activity of the protease PqqE. This is Non-peptidase homolog YmxG from Helicobacter pylori (strain ATCC 700392 / 26695) (Campylobacter pylori).